The primary structure comprises 138 residues: Superoxide dismutase [Mn] (138 aa).

The Mn(2+) site is built by H2, H49, D133, and H137.

It belongs to the iron/manganese superoxide dismutase family. Mn(2+) is required as a cofactor.

It carries out the reaction 2 superoxide + 2 H(+) = H2O2 + O2. Functionally, destroys superoxide anion radicals which are normally produced within the cells and which are toxic to biological systems. This Mycobacterium szulgai protein is Superoxide dismutase [Mn] (sodA).